The primary structure comprises 311 residues: Methionyl-tRNA formyltransferase (311 aa).

A (6S)-5,6,7,8-tetrahydrofolate-binding site is contributed by 109–112; sequence SLLP.

The protein belongs to the Fmt family.

It carries out the reaction L-methionyl-tRNA(fMet) + (6R)-10-formyltetrahydrofolate = N-formyl-L-methionyl-tRNA(fMet) + (6S)-5,6,7,8-tetrahydrofolate + H(+). In terms of biological role, attaches a formyl group to the free amino group of methionyl-tRNA(fMet). The formyl group appears to play a dual role in the initiator identity of N-formylmethionyl-tRNA by promoting its recognition by IF2 and preventing the misappropriation of this tRNA by the elongation apparatus. In Staphylococcus aureus (strain MW2), this protein is Methionyl-tRNA formyltransferase.